The chain runs to 225 residues: uncharacterized protein (225 aa).

A divalent metal cation contacts are provided by Glu69, Glu71, and Asp100.

The protein belongs to the FAH family.

This is an uncharacterized protein from Pyrococcus abyssi (strain GE5 / Orsay).